The following is a 218-amino-acid chain: MGAVRLAVIDYEAGNLHSACKGLERAGAEVQLVTEPTGLAAFDGIVLPGDGAFDPAMQQLRARGFGKAIREAVERQQPFLGICLGLQVLFESSEEGTEPGLSIVPGRVQRFRPEAGLRIPHMGWNQLQLTQAHSPLWAGIPDQTWAYFVHSYHGVPSDPAWVAATTQHGSQTCVAAIARGALFATQFHPEKSGPYGLKMLRNFVEFVARCSPLSAPRA.

Residues 5–213 enclose the Glutamine amidotransferase type-1 domain; sequence RLAVIDYEAG…VEFVARCSPL (209 aa). Cys83 acts as the Nucleophile in catalysis. Active-site residues include His188 and Glu190.

Heterodimer of HisH and HisF.

The protein localises to the cytoplasm. It catalyses the reaction 5-[(5-phospho-1-deoxy-D-ribulos-1-ylimino)methylamino]-1-(5-phospho-beta-D-ribosyl)imidazole-4-carboxamide + L-glutamine = D-erythro-1-(imidazol-4-yl)glycerol 3-phosphate + 5-amino-1-(5-phospho-beta-D-ribosyl)imidazole-4-carboxamide + L-glutamate + H(+). The catalysed reaction is L-glutamine + H2O = L-glutamate + NH4(+). Its pathway is amino-acid biosynthesis; L-histidine biosynthesis; L-histidine from 5-phospho-alpha-D-ribose 1-diphosphate: step 5/9. Functionally, IGPS catalyzes the conversion of PRFAR and glutamine to IGP, AICAR and glutamate. The HisH subunit catalyzes the hydrolysis of glutamine to glutamate and ammonia as part of the synthesis of IGP and AICAR. The resulting ammonia molecule is channeled to the active site of HisF. In Synechococcus sp. (strain JA-2-3B'a(2-13)) (Cyanobacteria bacterium Yellowstone B-Prime), this protein is Imidazole glycerol phosphate synthase subunit HisH.